A 575-amino-acid chain; its full sequence is MRDYVKINIASPKQILKWTERLTPKGKYIGKLKNSKKTLDKKGKCIRGGLFCEQIFGPTKKNTCRCGYYKNYKKSKKEKKHIKLCRICNVEITDPIIRNYRMGYIELNIPIINILYLNINPCYLAIITNLKINYLKQLHSGKAYITIKDKNQKEKKLTGGEAINDILSKIDLEKTLIKLTNNIHQYKEKNITIKNFKNILNKIKLYNYLLQTKIKFSWLLFKYLPVLPPNVRPIINMKNNQQISNDLNTLYASIINVNNKIIKLKESLIPDNYFINEKILLQKKVDQLINNEKYKENKLGKIINNKKLKSITENIKGKEGIIRENMLGKTVNFSGRSVIVVEPTLNLNECGLPKEMAINLFYPFIIKELIKLKLIKRLYKIKKITKILDIILENIIKNHYILLNRAPTLHRLNIQAFQPKLTIGKSIKLHPLVCSAFNADFDGDQMGVHIPLSLKAQAEARNILISINNCNSLKNGDPNILPSQDIILGCYFSNIENCNLLYILNKIQIYTNMEKIKMEYKKENLSIHNFIWLNFKNKQQIDKLKIKRKNLIKKIIFLRTTVGRILFNDIIKNFL.

Residues cysteine 64, cysteine 66, cysteine 85, and cysteine 88 each coordinate Zn(2+). 3 residues coordinate Mg(2+): aspartate 440, aspartate 442, and aspartate 444.

The protein belongs to the RNA polymerase beta' chain family. RpoC1 subfamily. In terms of assembly, in plastids the minimal PEP RNA polymerase catalytic core is composed of four subunits: alpha, beta, beta', and beta''. When a (nuclear-encoded) sigma factor is associated with the core the holoenzyme is formed, which can initiate transcription. Mg(2+) serves as cofactor. Requires Zn(2+) as cofactor.

It is found in the plastid. The enzyme catalyses RNA(n) + a ribonucleoside 5'-triphosphate = RNA(n+1) + diphosphate. DNA-dependent RNA polymerase catalyzes the transcription of DNA into RNA using the four ribonucleoside triphosphates as substrates. This chain is DNA-directed RNA polymerase subunit beta', found in Euglena longa (Euglenophycean alga).